Consider the following 86-residue polypeptide: Cell division topological specificity factor (86 aa).

This sequence belongs to the MinE family.

In terms of biological role, prevents the cell division inhibition by proteins MinC and MinD at internal division sites while permitting inhibition at polar sites. This ensures cell division at the proper site by restricting the formation of a division septum at the midpoint of the long axis of the cell. This is Cell division topological specificity factor from Shewanella woodyi (strain ATCC 51908 / MS32).